The chain runs to 296 residues: NADPH-dependent 1-acyldihydroxyacetone phosphate reductase (296 aa).

Isoleucine 9 serves as a coordination point for NADP(+). Positions 11–15 (GCSEG) match the GXSXG motif. The NADP(+) site is built by threonine 35, arginine 41, aspartate 56, asparagine 84, lysine 117, tyrosine 148, lysine 152, valine 181, and threonine 183. The active-site Proton donor is tyrosine 148. Lysine 152 (lowers pKa of active site Tyr) is an active-site residue.

It belongs to the short-chain dehydrogenases/reductases (SDR) family.

The protein localises to the lipid droplet. It is found in the cytoplasm. Its subcellular location is the vacuole. It localises to the endoplasmic reticulum. The protein resides in the golgi apparatus. The protein localises to the mitochondrion outer membrane. The enzyme catalyses 1-hexadecanoyl-sn-glycero-3-phosphate + NADP(+) = 1-hexadecanoylglycerone 3-phosphate + NADPH + H(+). It catalyses the reaction a 1-acylglycerone 3-phosphate + NADPH + H(+) = a 1-acyl-sn-glycero-3-phosphate + NADP(+). It carries out the reaction a triacylglycerol + H2O = a diacylglycerol + a fatty acid + H(+). Can convert acyl and alkyl dihydroxyacetone-phosphate (DHAP) into glycerolipids and ether lipids, respectively. Required for the biosynthesis of phosphatidic acid via the DHAP pathway, where it reduces 1-acyl DHAP to lysophosphatidic acid (LPA). Also has triacylglycerol (TAG) lipase activity. Involved in the mobilization of the non-polar storage lipids triacylglycerols (TAGs) from lipid particles by hydrolysis of TAGs. Lipolysis of TAG by AYR1 is essential for starvation-induced autophagy. Forms an NADPH-regulated cation-selective channel in the mitochondrial outer membrane. This is NADPH-dependent 1-acyldihydroxyacetone phosphate reductase (ayr1) from Schizosaccharomyces pombe (strain 972 / ATCC 24843) (Fission yeast).